A 974-amino-acid chain; its full sequence is Ovochymase-2 (974 aa).

The first 21 residues, 1-21 (MAETSIFPIMMLTVMIGVGRG), serve as a signal peptide directing secretion. Residues 22 to 49 (VTDSPGRVSRCGERPAANTSVSYGLLSR) constitute a propeptide, activation peptide. N-linked (GlcNAc...) asparagine glycosylation is present at asparagine 39. A Peptidase S1 1 domain is found at 50–299 (IVGGTSAVKG…LLNWLSENLN (250 aa)). Cysteine 75 and cysteine 91 form a disulfide bridge. Histidine 90 functions as the Charge relay system in the catalytic mechanism. Positions 112 and 117 each coordinate Ca(2+). Catalysis depends on aspartate 140, which acts as the Charge relay system. Disulfide bonds link cysteine 174/cysteine 244, cysteine 205/cysteine 223, cysteine 234/cysteine 263, cysteine 312/cysteine 342, cysteine 369/cysteine 388, cysteine 435/cysteine 462, cysteine 489/cysteine 510, cysteine 615/cysteine 631, cysteine 713/cysteine 776, cysteine 741/cysteine 754, and cysteine 766/cysteine 795. Residue serine 238 is the Charge relay system of the active site. 2 consecutive CUB domains span residues 312–425 (CSTN…YEAV) and 435–547 (CGSV…ISFV). The 230-residue stretch at 590 to 819 (LIKAEEAMPN…FIPWIMETIL (230 aa)) folds into the Peptidase S1 2 domain. The propeptide at 590 to 974 (LIKAEEAMPN…WLSYSFHNQN (385 aa)) is activation peptide. Residue asparagine 763 is glycosylated (N-linked (GlcNAc...) asparagine). The segment at 830–858 (EPHHPLFPPDKPSQQKALLPDSPPSSSSQ) is disordered. An N-linked (GlcNAc...) asparagine glycan is attached at asparagine 926.

Belongs to the peptidase S1 family. Post-translationally, the catalytically inactive 107 kDa form is processed both N- and C-terminally to give rise to the 66 kDa catalytically active form and inactive forms of 82 kDa and 59 kDa. Expressed specifically in the cells lining the bottom of epithelial folds in the oviductal pars recta.

The protein localises to the secreted. The catalysed reaction is Preferential cleavage at 371-Gly-Ser-Arg-|-Trp-374 of glycoprotein gp43 in Xenopus laevis coelemic egg envelope to yield gp41.. Mediates gamete interaction by affecting the vitelline coat. This Bufo japonicus (Japanese common toad) protein is Ovochymase-2 (OVCH2).